Consider the following 239-residue polypeptide: MLLLAGLGNPGPQYQNHRHNVGFMAADAIFRRHSFSPWSKKFSALVAEGRVGTEKLLLVKPQTFMNLSGQAVGEAMRFYKLQPSDIIVFYDELDLAPGKVRVKRGSGSGGHNGIKSIDAHCGQDYRRVRIGIGHPGDKARVTPHVLGDFAKADHAWLDPLLDAMAENVDLLITGDESGFMNKASLAVQGKAADIEMAGEKPAQKGRSHIRQARPKAPPAELPSSGPMAAMLKKLFGGKE.

Y14 is a tRNA binding site. Residue H19 is the Proton acceptor of the active site. The tRNA site is built by F64, N66, and N112. Positions 199 to 227 are disordered; the sequence is EKPAQKGRSHIRQARPKAPPAELPSSGPM. A compositionally biased stretch (basic residues) spans 203–213; sequence QKGRSHIRQAR.

This sequence belongs to the PTH family. In terms of assembly, monomer.

It localises to the cytoplasm. It carries out the reaction an N-acyl-L-alpha-aminoacyl-tRNA + H2O = an N-acyl-L-amino acid + a tRNA + H(+). Functionally, hydrolyzes ribosome-free peptidyl-tRNAs (with 1 or more amino acids incorporated), which drop off the ribosome during protein synthesis, or as a result of ribosome stalling. Its function is as follows. Catalyzes the release of premature peptidyl moieties from peptidyl-tRNA molecules trapped in stalled 50S ribosomal subunits, and thus maintains levels of free tRNAs and 50S ribosomes. This is Peptidyl-tRNA hydrolase from Chelativorans sp. (strain BNC1).